We begin with the raw amino-acid sequence, 161 residues long: Cyclic pyranopterin monophosphate synthase (161 aa).

Substrate-binding positions include 76-78 (MCH) and 114-115 (ME). The active site involves D129.

It belongs to the MoaC family. Homohexamer; trimer of dimers.

The enzyme catalyses (8S)-3',8-cyclo-7,8-dihydroguanosine 5'-triphosphate = cyclic pyranopterin phosphate + diphosphate. The protein operates within cofactor biosynthesis; molybdopterin biosynthesis. Catalyzes the conversion of (8S)-3',8-cyclo-7,8-dihydroguanosine 5'-triphosphate to cyclic pyranopterin monophosphate (cPMP). This is Cyclic pyranopterin monophosphate synthase from Clostridium acetobutylicum (strain ATCC 824 / DSM 792 / JCM 1419 / IAM 19013 / LMG 5710 / NBRC 13948 / NRRL B-527 / VKM B-1787 / 2291 / W).